A 96-amino-acid chain; its full sequence is Small ribosomal subunit protein bS6c (96 aa).

Belongs to the bacterial ribosomal protein bS6 family.

It is found in the plastid. The protein localises to the chloroplast. In terms of biological role, binds together with bS18 to 16S ribosomal RNA. The polypeptide is Small ribosomal subunit protein bS6c (rps6) (Guillardia theta (Cryptophyte)).